The following is a 558-amino-acid chain: Glucose-6-phosphate isomerase (558 aa).

Ala-2 bears the N-acetylalanine mark. At Lys-12 the chain carries N6-acetyllysine. Phosphoserine is present on residues Ser-86 and Ser-107. Lys-142 is modified (N6-acetyllysine). 159–160 (GS) is a D-glucose 6-phosphate binding site. At Ser-185 the chain carries Phosphoserine; by CK2. Residue 210 to 215 (SKTFTT) coordinates D-glucose 6-phosphate. At Thr-250 the chain carries Phosphothreonine. The D-glucose 6-phosphate site is built by Gln-354, Glu-358, and His-389. Glu-358 acts as the Proton donor in catalysis. His-389 is a catalytic residue. Lys-454 carries the post-translational modification N6-acetyllysine; alternate. At Lys-454 the chain carries N6-malonyllysine; alternate. Lys-454 carries the post-translational modification N6-succinyllysine; alternate. Ser-455 bears the Phosphoserine mark. Lys-519 serves as a coordination point for D-glucose 6-phosphate. Lys-519 is a catalytic residue.

Belongs to the GPI family. In terms of assembly, homodimer; in the catalytically active form. Monomer in the secreted form. Phosphorylation at Ser-185 by CK2 has been shown to decrease enzymatic activity and may contribute to secretion by a non-classical secretory pathway. Post-translationally, ISGylated.

It localises to the cytoplasm. The protein resides in the secreted. It carries out the reaction alpha-D-glucose 6-phosphate = beta-D-fructose 6-phosphate. Its pathway is carbohydrate degradation; glycolysis; D-glyceraldehyde 3-phosphate and glycerone phosphate from D-glucose: step 2/4. Its function is as follows. In the cytoplasm, catalyzes the conversion of glucose-6-phosphate to fructose-6-phosphate, the second step in glycolysis, and the reverse reaction during gluconeogenesis. Besides it's role as a glycolytic enzyme, also acts as a secreted cytokine: acts as an angiogenic factor (AMF) that stimulates endothelial cell motility. Acts as a neurotrophic factor, neuroleukin, for spinal and sensory neurons. It is secreted by lectin-stimulated T-cells and induces immunoglobulin secretion. This is Glucose-6-phosphate isomerase from Rattus norvegicus (Rat).